A 550-amino-acid polypeptide reads, in one-letter code: Probable asparagine synthetase [glutamine-hydrolyzing] (550 aa).

The active-site For GATase activity is C2. A Glutamine amidotransferase type-2 domain is found at 2–189; that stretch reads CGIICFIQYG…PNQYVTIDLS (188 aa). L-glutamine-binding positions include 53–57, 78–80, and D100; these read RLAIM and NGE. The Asparagine synthetase domain maps to 213–530; that stretch reads YYQSHKSLID…GGRDHIIPHY (318 aa). ATP is bound by residues L256, V284, and 360 to 361; that span reads SG.

It carries out the reaction L-aspartate + L-glutamine + ATP + H2O = L-asparagine + L-glutamate + AMP + diphosphate + H(+). The protein operates within amino-acid biosynthesis; L-asparagine biosynthesis; L-asparagine from L-aspartate (L-Gln route): step 1/1. This is Probable asparagine synthetase [glutamine-hydrolyzing] from Acanthamoeba polyphaga mimivirus (APMV).